The sequence spans 20 residues: Putative 60 kDa spermidine-binding protein (20 aa).

Residues Ser1–Glu20 form a disordered region. Residues Glu10–Glu20 are compositionally biased toward polar residues.

In terms of assembly, dimer of 18 kDa and 60 kDa subunit.

The protein localises to the microsome membrane. The protein resides in the endoplasmic reticulum membrane. Its function is as follows. May have spermidine-binding activity. This chain is Putative 60 kDa spermidine-binding protein, found in Zea mays (Maize).